Consider the following 137-residue polypeptide: Large ribosomal subunit protein uL16 (137 aa).

This sequence belongs to the universal ribosomal protein uL16 family. As to quaternary structure, part of the 50S ribosomal subunit.

Functionally, binds 23S rRNA and is also seen to make contacts with the A and possibly P site tRNAs. This chain is Large ribosomal subunit protein uL16, found in Maricaulis maris (strain MCS10) (Caulobacter maris).